We begin with the raw amino-acid sequence, 257 residues long: Small ribosomal subunit protein uS2 (257 aa).

It belongs to the universal ribosomal protein uS2 family.

This chain is Small ribosomal subunit protein uS2, found in Ruegeria pomeroyi (strain ATCC 700808 / DSM 15171 / DSS-3) (Silicibacter pomeroyi).